A 207-amino-acid chain; its full sequence is MTKKTESKELPPFEYPEGYQLFAGVDEVGRGPLVGAVVTAAVILDPNNPIEGLTDSKKLTDKKRELLFPEIQEKALAWSLGRCEAHEIDELNILQATMVAMQRAIAGLNITPDFALIDGNKVPELPMAGLAVVKGDLRVQEISAASIIAKVTRDREMEELDKAYPQYGFAKHKGYPTKAHFEAIEEHGVISEHRRSFKPVKRVLGIE.

Positions 20 to 207 (QLFAGVDEVG…KPVKRVLGIE (188 aa)) constitute an RNase H type-2 domain. Residues D26, E27, and D118 each contribute to the a divalent metal cation site.

It belongs to the RNase HII family. The cofactor is Mn(2+). Mg(2+) is required as a cofactor.

It is found in the cytoplasm. The catalysed reaction is Endonucleolytic cleavage to 5'-phosphomonoester.. Its function is as follows. Endonuclease that specifically degrades the RNA of RNA-DNA hybrids. This Aliivibrio fischeri (strain MJ11) (Vibrio fischeri) protein is Ribonuclease HII.